The primary structure comprises 266 residues: Receptor-like protein 5 (266 aa).

The first 19 residues, 1–19, serve as a signal peptide directing secretion; the sequence is MINYRHIVFCLCVMVVVDS. Over 20 to 169 the chain is Extracellular; that stretch reads RLTPYLAAIE…PTRNKNKPTV (150 aa). LRR repeat units lie at residues 93–117 and 119–143; these read LTSL…ITKL and NLTI…IVIL. A glycan (N-linked (GlcNAc...) asparagine) is linked at asparagine 119. The chain crosses the membrane as a helical span at residues 170–190; the sequence is LVLLLGILVGLVVAGGASFGF. At 191–266 the chain is on the cytoplasmic side; sequence YLYRIRKQPK…TNQNPHLPYM (76 aa).

Belongs to the RLP family.

Its subcellular location is the cell membrane. The sequence is that of Receptor-like protein 5 from Arabidopsis thaliana (Mouse-ear cress).